The sequence spans 918 residues: Glutamate receptor ionotropic, kainate 1 (918 aa).

An N-terminal signal peptide occupies residues 1–30 (MELGTLLAQPGLWTRDTSWALLYFLCYILP). Residues 31-576 (QTAPQVLRIG…VFSFLNPLSP (546 aa)) lie on the Extracellular side of the membrane. Asn-68, Asn-74, Asn-276, Asn-379, Asn-428, Asn-439, and Asn-446 each carry an N-linked (GlcNAc...) asparagine glycan. L-glutamate is bound by residues Pro-531, Thr-533, and Arg-538. An N-linked (GlcNAc...) asparagine glycan is attached at Asn-561. Residues 577–597 (DIWMYVLLACLGVSCVLFVIA) form a helical membrane-spanning segment. Residues 598 to 653 (RFTPYEWYNPHPCNPDSDVVENNFTLLNSFWFGVGALMQQGSELMPKALSTRIVGG) are Cytoplasmic-facing. The helical transmembrane segment at 654–674 (IWWFFTLIIISSYTANLAAFL) threads the bilayer. Topologically, residues 675 to 834 (TVERMESPID…KEASALGVEN (160 aa)) are extracellular. Positions 704 and 705 each coordinate L-glutamate. The residue at position 725 (Ser-725) is a Phosphoserine; by PKC. Glu-753 serves as a coordination point for L-glutamate. Thr-761 is modified (phosphothreonine; by PKC). A disulfide bridge links Cys-765 with Cys-819. The N-linked (GlcNAc...) asparagine glycan is linked to Asn-766. A helical membrane pass occupies residues 835–855 (IGGIFIVLAAGLVLSVFVAIG). The Cytoplasmic portion of the chain corresponds to 856–918 (EFIYKSRKNN…IRKQSSVHTV (63 aa)).

It belongs to the glutamate-gated ion channel (TC 1.A.10.1) family. GRIK1 subfamily. In terms of assembly, homotetramer or heterotetramer of pore-forming glutamate receptor subunits. Tetramers may be formed by the dimerization of dimers. Can form functional heteromeric receptors with GRIK4 and GRIK5. Interacts with KLHL17.

It is found in the cell membrane. Its subcellular location is the postsynaptic cell membrane. It carries out the reaction Ca(2+)(in) = Ca(2+)(out). Its function is as follows. Ionotropic glutamate receptor that functions as a cation-permeable ligand-gated ion channel, gated by L-glutamate and the glutamatergic agonist kainic acid. L-glutamate acts as an excitatory neurotransmitter at many synapses in the central nervous system. Binding of the excitatory neurotransmitter L-glutamate induces a conformation change, leading to the opening of the cation channel, and thereby converts the chemical signal to an electrical impulse. The receptor then desensitizes rapidly and enters a transient inactive state, characterized by the presence of bound agonist. This Macaca fascicularis (Crab-eating macaque) protein is Glutamate receptor ionotropic, kainate 1 (GRIK1).